The sequence spans 113 residues: MNTFKVQFFSPDNRISFDEVVSLSVNGLEGELVILAYHSPYLIYLLPGIITAQMSNQTKEKVVIDNGILEVANNNCSIITNQIQVFDHLTHDEESLKDKRVGIYLSYLDVKSL.

The protein belongs to the ATPase epsilon chain family. As to quaternary structure, F-type ATPases have 2 components, CF(1) - the catalytic core - and CF(0) - the membrane proton channel. CF(1) has five subunits: alpha(3), beta(3), gamma(1), delta(1), epsilon(1). CF(0) has three main subunits: a, b and c.

The protein localises to the cell membrane. Its function is as follows. Produces ATP from ADP in the presence of a proton gradient across the membrane. The polypeptide is ATP synthase epsilon chain (Wolbachia pipientis subsp. Culex pipiens (strain wPip)).